The sequence spans 284 residues: 4-diphosphocytidyl-2-C-methyl-D-erythritol kinase (284 aa).

Lysine 14 is an active-site residue. Residue 97–107 (PMGGGVGGGSS) participates in ATP binding. Residue aspartate 139 is part of the active site.

It belongs to the GHMP kinase family. IspE subfamily.

The enzyme catalyses 4-CDP-2-C-methyl-D-erythritol + ATP = 4-CDP-2-C-methyl-D-erythritol 2-phosphate + ADP + H(+). It participates in isoprenoid biosynthesis; isopentenyl diphosphate biosynthesis via DXP pathway; isopentenyl diphosphate from 1-deoxy-D-xylulose 5-phosphate: step 3/6. In terms of biological role, catalyzes the phosphorylation of the position 2 hydroxy group of 4-diphosphocytidyl-2C-methyl-D-erythritol. The protein is 4-diphosphocytidyl-2-C-methyl-D-erythritol kinase of Pseudoalteromonas translucida (strain TAC 125).